The following is a 153-amino-acid chain: Interleukin-4 (153 aa).

The N-terminal stretch at 1 to 24 is a signal peptide; it reads MGLTSQLLPPLFFLLACAGNFVHG. 3 disulfide bridges follow: Cys27–Cys151, Cys48–Cys89, and Cys70–Cys123. Asn62 carries an N-linked (GlcNAc...) asparagine glycan.

The protein belongs to the IL-4/IL-13 family. Interacts with IL4R. Interacts with IL13RA1.

It is found in the secreted. Its function is as follows. Cytokine secreted primarily by mast cells, T-cells, eosinophils, and basophils that plays a role in regulating antibody production, hematopoiesis and inflammation, and the development of effector T-cell responses. Induces the expression of class II MHC molecules on resting B-cells. Enhances both secretion and cell surface expression of IgE and IgG1. Also regulates the expression of the low affinity Fc receptor for IgE (CD23) on both lymphocytes and monocytes. Positively regulates IL31RA expression in macrophages. Stimulates autophagy in dendritic cells by interfering with mTORC1 signaling and through the induction of RUFY4. In addition, plays a critical role in higher functions of the normal brain, such as memory and learning. Upon binding to IL4, IL4R receptor dimerizes either with the common IL2R gamma chain/IL2RG to produce the type 1 signaling complex, located mainly on hematopoietic cells, or with the IL13RA1 to produce the type 2 complex, which is also expressed on nonhematopoietic cells. Engagement of both types of receptors initiates JAK3 and to a lower extend JAK1 phosphorylation leading to activation of the signal transducer and activator of transcription 6/STAT6. This is Interleukin-4 (IL4) from Homo sapiens (Human).